Consider the following 389-residue polypeptide: UDP-N-acetylglucosamine--N-acetylmuramyl-(pentapeptide) pyrophosphoryl-undecaprenol N-acetylglucosamine transferase (389 aa).

Residues 39–41, Asn-157, Arg-193, Ser-221, Ile-275, 294–299, and Gln-320 contribute to the UDP-N-acetyl-alpha-D-glucosamine site; these read TGG and ALTVSE.

Belongs to the glycosyltransferase 28 family. MurG subfamily.

The protein localises to the cell inner membrane. It catalyses the reaction di-trans,octa-cis-undecaprenyl diphospho-N-acetyl-alpha-D-muramoyl-L-alanyl-D-glutamyl-meso-2,6-diaminopimeloyl-D-alanyl-D-alanine + UDP-N-acetyl-alpha-D-glucosamine = di-trans,octa-cis-undecaprenyl diphospho-[N-acetyl-alpha-D-glucosaminyl-(1-&gt;4)]-N-acetyl-alpha-D-muramoyl-L-alanyl-D-glutamyl-meso-2,6-diaminopimeloyl-D-alanyl-D-alanine + UDP + H(+). It functions in the pathway cell wall biogenesis; peptidoglycan biosynthesis. Its function is as follows. Cell wall formation. Catalyzes the transfer of a GlcNAc subunit on undecaprenyl-pyrophosphoryl-MurNAc-pentapeptide (lipid intermediate I) to form undecaprenyl-pyrophosphoryl-MurNAc-(pentapeptide)GlcNAc (lipid intermediate II). The sequence is that of UDP-N-acetylglucosamine--N-acetylmuramyl-(pentapeptide) pyrophosphoryl-undecaprenol N-acetylglucosamine transferase from Saccharophagus degradans (strain 2-40 / ATCC 43961 / DSM 17024).